Here is a 304-residue protein sequence, read N- to C-terminus: Glycine--tRNA ligase alpha subunit (304 aa).

It belongs to the class-II aminoacyl-tRNA synthetase family. Tetramer of two alpha and two beta subunits.

The protein localises to the cytoplasm. The catalysed reaction is tRNA(Gly) + glycine + ATP = glycyl-tRNA(Gly) + AMP + diphosphate. This is Glycine--tRNA ligase alpha subunit from Yersinia enterocolitica serotype O:8 / biotype 1B (strain NCTC 13174 / 8081).